The primary structure comprises 368 residues: Phospho-N-acetylmuramoyl-pentapeptide-transferase (368 aa).

10 helical membrane-spanning segments follow: residues 32–52 (TGGA…WIID), 79–99 (TPTM…VLWA), 102–122 (LNPY…IGFY), 142–160 (LLLE…TRLG), 176–196 (VALD…VGAG), 207–227 (GLAI…AYLA), 244–264 (AGEL…FLWF), 271–291 (IFMG…IAVA), 296–316 (IVLA…IVQV), and 345–365 (QIVI…LSTL).

The protein belongs to the glycosyltransferase 4 family. MraY subfamily. Mg(2+) is required as a cofactor.

It is found in the cell inner membrane. It carries out the reaction UDP-N-acetyl-alpha-D-muramoyl-L-alanyl-gamma-D-glutamyl-meso-2,6-diaminopimeloyl-D-alanyl-D-alanine + di-trans,octa-cis-undecaprenyl phosphate = di-trans,octa-cis-undecaprenyl diphospho-N-acetyl-alpha-D-muramoyl-L-alanyl-D-glutamyl-meso-2,6-diaminopimeloyl-D-alanyl-D-alanine + UMP. The protein operates within cell wall biogenesis; peptidoglycan biosynthesis. Catalyzes the initial step of the lipid cycle reactions in the biosynthesis of the cell wall peptidoglycan: transfers peptidoglycan precursor phospho-MurNAc-pentapeptide from UDP-MurNAc-pentapeptide onto the lipid carrier undecaprenyl phosphate, yielding undecaprenyl-pyrophosphoryl-MurNAc-pentapeptide, known as lipid I. The protein is Phospho-N-acetylmuramoyl-pentapeptide-transferase of Nitrobacter winogradskyi (strain ATCC 25391 / DSM 10237 / CIP 104748 / NCIMB 11846 / Nb-255).